Consider the following 22-residue polypeptide: Plasticin-TR (22 aa).

Belongs to the frog skin active peptide (FSAP) family. Plasticin subfamily. In terms of assembly, exhibits a propensity to self-association and forms helical oligomers in membrane-mimetic environments. In terms of tissue distribution, expressed by the skin glands.

It localises to the secreted. The protein localises to the target cell membrane. Functionally, has no antimicrobial activity against Gram-negative bacterium E.coli ATCC 25922, Gram-positive bacterium S.epidermidis ATCC 12228 and against fungus C.albicans ATCC 24433 at concentrations up to 100 uM. Has an anti-inflammatory effect, since it inhibits the production of the pro-inflammatory cytokines TNF-alpha and IL-1 beta. Has high activity of stimulation of insulin release, which may protect the species from being eaten by predators by causing fatal hypoglycemia. Is not cytotoxic to cancer line cells. Does not show hemolysis on mouse erythrocytes. Adopts a mixture of alpha-helical and beta-sheet structures. This Phyllomedusa trinitatis (Trinidad leaf frog) protein is Plasticin-TR.